Consider the following 229-residue polypeptide: Protein rep (229 aa).

Tyr-214 contacts DNA.

This sequence belongs to the Gram-positive plasmids replication protein type 1 family.

Functionally, produces a single-strand nick in a specific site of the plasmid, and this nick results in single-strand replication by rolling circle mechanism. This is Protein rep from Staphylococcus aureus.